Here is a 163-residue protein sequence, read N- to C-terminus: Crossover junction endodeoxyribonuclease RuvC (163 aa).

Residues Asp7, Glu67, and Asp140 contribute to the active site. Mg(2+) is bound by residues Asp7, Glu67, and Asp140.

This sequence belongs to the RuvC family. Homodimer which binds Holliday junction (HJ) DNA. The HJ becomes 2-fold symmetrical on binding to RuvC with unstacked arms; it has a different conformation from HJ DNA in complex with RuvA. In the full resolvosome a probable DNA-RuvA(4)-RuvB(12)-RuvC(2) complex forms which resolves the HJ. Requires Mg(2+) as cofactor.

Its subcellular location is the cytoplasm. The enzyme catalyses Endonucleolytic cleavage at a junction such as a reciprocal single-stranded crossover between two homologous DNA duplexes (Holliday junction).. Functionally, the RuvA-RuvB-RuvC complex processes Holliday junction (HJ) DNA during genetic recombination and DNA repair. Endonuclease that resolves HJ intermediates. Cleaves cruciform DNA by making single-stranded nicks across the HJ at symmetrical positions within the homologous arms, yielding a 5'-phosphate and a 3'-hydroxyl group; requires a central core of homology in the junction. The consensus cleavage sequence is 5'-(A/T)TT(C/G)-3'. Cleavage occurs on the 3'-side of the TT dinucleotide at the point of strand exchange. HJ branch migration catalyzed by RuvA-RuvB allows RuvC to scan DNA until it finds its consensus sequence, where it cleaves and resolves the cruciform DNA. This Desulforamulus reducens (strain ATCC BAA-1160 / DSM 100696 / MI-1) (Desulfotomaculum reducens) protein is Crossover junction endodeoxyribonuclease RuvC.